The chain runs to 657 residues: MPRYTVHVRGEWLAVPCQDGKLSVGWLGREAVRRYMKNKPDNGGFTSVDEVRFLVRRCKGLGLLDNEDLLEVALEDNEFVEVVIEGDVMSPDFIPSQPEGVFLYSKYREPEKYIALDGDSLSTEDLVNLGKGHYKIKLTSIAEKKVQQSREVIDSIIKERTVVYGITTGFGKFARTVIPANKLQELQVNLVRSHSSGVGKPLSPERCRMLLALRINVLAKGYSGISLETLKQVIEVFNASCLSYVPEKGTVGASGDLAPLSHLALGLIGEGKMWSPKSGWADAKYVLEAHGLKPIVLKPKEGLALINGTQMITSLGCEAVERASAIARQADIVAALTLEVLKGTTKAFDTDIHAVRPHRGQIEVAFRFRSLLDSDHHPSEIAESHRFCDRVQDAYTLRCCPQVHGVVNDTIAFVKDIITTELNSATDNPMVFASRGETISGGNFHGEYPAKALDYLAIGVHELAAISERRIERLCNPSLSELPAFLVAEGGLNSGFMIAHCTAAALVSESKALCHPSSVDSLSTSAATEDHVSMGGWAARKALRVIEHVEQVLAIELLAACQGIEFLRPLKTTTPLEKVYDLVRSVVRPWIKDRFMAPDIEAAHRLLLDQKVWEVAAPYIEKYRMEHIPESRPLSPTAFSLESLRKNSATIPESDDL.

The segment at residues 253-255 is a cross-link (5-imidazolinone (Ala-Gly)); the sequence is ASG. 2,3-didehydroalanine (Ser) is present on serine 254. Threonine 396 is modified (phosphothreonine). Serine 635 carries the post-translational modification Phosphoserine. At threonine 637 the chain carries Phosphothreonine. Position 648 is a phosphoserine (serine 648).

Belongs to the PAL/histidase family. Post-translationally, contains an active site 4-methylidene-imidazol-5-one (MIO), which is formed autocatalytically by cyclization and dehydration of residues Ala-Ser-Gly. Liver and skin.

It catalyses the reaction L-histidine = trans-urocanate + NH4(+). Its pathway is amino-acid degradation; L-histidine degradation into L-glutamate; N-formimidoyl-L-glutamate from L-histidine: step 1/3. The sequence is that of Histidine ammonia-lyase (Hal) from Rattus norvegicus (Rat).